Reading from the N-terminus, the 456-residue chain is Phosphomannomutase (456 aa).

Ser-98 functions as the Phosphoserine intermediate in the catalytic mechanism. Ser-98, Asp-245, Asp-247, and Asp-249 together coordinate Mg(2+).

Belongs to the phosphohexose mutase family. The cofactor is Mg(2+).

The enzyme catalyses alpha-D-mannose 1-phosphate = D-mannose 6-phosphate. Its pathway is nucleotide-sugar biosynthesis; GDP-alpha-D-mannose biosynthesis; alpha-D-mannose 1-phosphate from D-fructose 6-phosphate: step 2/2. Functionally, involved in the biosynthesis of the capsular polysaccharide colanic acid. The chain is Phosphomannomutase (manB) from Salmonella typhimurium (strain LT2 / SGSC1412 / ATCC 700720).